The primary structure comprises 146 residues: Ribonuclease H (146 aa).

One can recognise an RNase H type-1 domain in the interval 4–145 (ELNKVVVYTD…ADMLARSQIV (142 aa)). Mg(2+)-binding residues include Asp13, Glu51, Asp73, and Asp137.

Belongs to the RNase H family. As to quaternary structure, monomer. Requires Mg(2+) as cofactor.

It localises to the cytoplasm. It carries out the reaction Endonucleolytic cleavage to 5'-phosphomonoester.. In terms of biological role, endonuclease that specifically degrades the RNA of RNA-DNA hybrids. The sequence is that of Ribonuclease H from Ehrlichia ruminantium (strain Gardel).